Here is a 437-residue protein sequence, read N- to C-terminus: MADYKVKDISLAEWGRKAIELAENEMPGLMELRREYGPSQPLKGAKIAGCLHMTVQTAVLIETLKALGADVRWSSCNIFSTQDNAAAAIAKAGVPVFAWKGETDEEYEWCIAQTVKGFSGDGLPNMILDDGGDLTNLVIDHHPELVPKIFGISEETTTGVKNLYKRLSKGNLPMCAINVNDSVTKSKFDNLYGCRESLVDGMKRATDVMIAGKTCCVCGYGDVGKGCAAALRAFGARVVVTEVDPINALQASMEGYQVALVEDVMADAHIFVTTTGNDDIITSEHFPHMRDDAIVCNIGHFDTEIQVGWLEANAKEHVEIKPQVDRYTMENGRHIILLAKGRLVNLGCASGHPSFVMSNSFTNQVLAQIELWSNRDNGKYPRGDKAGVFFLPKALDEKVAALHLAHVGAKLTKLTPKQAEYINCPVNGPFKPDHYRY.

3 residues coordinate substrate: T54, D130, and E155. Residue 156–158 (TTT) coordinates NAD(+). Residues K185 and D189 each coordinate substrate. NAD(+)-binding positions include N190, 219–224 (GYGDVG), E242, N277, 298–300 (IGH), and N345.

The protein belongs to the adenosylhomocysteinase family. Homotetramer. The cofactor is NAD(+).

Its subcellular location is the cytoplasm. It catalyses the reaction S-adenosyl-L-homocysteine + H2O = L-homocysteine + adenosine. It functions in the pathway amino-acid biosynthesis; L-homocysteine biosynthesis; L-homocysteine from S-adenosyl-L-homocysteine: step 1/1. Adenosylhomocysteine is a competitive inhibitor of S-adenosyl-L-methionine-dependent methyl transferase reactions; therefore adenosylhomocysteinase may play a key role in the control of methylations via regulation of the intracellular concentration of adenosylhomocysteine. This Leishmania donovani protein is Adenosylhomocysteinase.